A 296-amino-acid chain; its full sequence is NAD kinase (296 aa).

D74 serves as the catalytic Proton acceptor. Residues D74–G75, N148–D149, R176, D178, and T189–S194 each bind NAD(+).

It belongs to the NAD kinase family. A divalent metal cation serves as cofactor.

The protein resides in the cytoplasm. The enzyme catalyses NAD(+) + ATP = ADP + NADP(+) + H(+). Involved in the regulation of the intracellular balance of NAD and NADP, and is a key enzyme in the biosynthesis of NADP. Catalyzes specifically the phosphorylation on 2'-hydroxyl of the adenosine moiety of NAD to yield NADP. The polypeptide is NAD kinase (Nitrosomonas eutropha (strain DSM 101675 / C91 / Nm57)).